Reading from the N-terminus, the 475-residue chain is tRNA modification GTPase MnmE (475 aa).

Residues arginine 24, glutamate 81, and lysine 124 each contribute to the (6S)-5-formyl-5,6,7,8-tetrahydrofolate site. Residues 220-397 (GLSVVLAGQP…LRKELLRLVG (178 aa)) form the TrmE-type G domain. Residue asparagine 230 participates in K(+) binding. GTP is bound by residues 230 to 235 (NVGKSS), 249 to 255 (TPIAGTT), 274 to 277 (DTAG), and 378 to 380 (SAR). Residue serine 234 coordinates Mg(2+). The K(+) site is built by threonine 249, isoleucine 251, and threonine 254. Threonine 255 serves as a coordination point for Mg(2+). Lysine 475 is a (6S)-5-formyl-5,6,7,8-tetrahydrofolate binding site.

It belongs to the TRAFAC class TrmE-Era-EngA-EngB-Septin-like GTPase superfamily. TrmE GTPase family. Homodimer. Heterotetramer of two MnmE and two MnmG subunits. It depends on K(+) as a cofactor.

It localises to the cytoplasm. Exhibits a very high intrinsic GTPase hydrolysis rate. Involved in the addition of a carboxymethylaminomethyl (cmnm) group at the wobble position (U34) of certain tRNAs, forming tRNA-cmnm(5)s(2)U34. This is tRNA modification GTPase MnmE from Cupriavidus pinatubonensis (strain JMP 134 / LMG 1197) (Cupriavidus necator (strain JMP 134)).